The chain runs to 509 residues: Pentatricopeptide repeat-containing protein At2g13420, mitochondrial (509 aa).

Residues 1–19 constitute a mitochondrion transit peptide; it reads MLLLKQISPPFHLHQLRRR. 8 PPR repeats span residues 172 to 202, 206 to 240, 241 to 285, 286 to 320, 321 to 355, 356 to 390, 391 to 425, and 426 to 460; these read RLVE…RKEE, DEKV…GIEP, NVVT…GIEP, DVTS…GISP, TIET…GISP, SSAT…LCKP, STQT…ETGP, and DLDS…GFLP.

It belongs to the PPR family. P subfamily.

The protein localises to the mitochondrion. This is Pentatricopeptide repeat-containing protein At2g13420, mitochondrial from Arabidopsis thaliana (Mouse-ear cress).